The chain runs to 98 residues: Putative transcriptional regulator YdaS (98 aa).

Its function is as follows. When overexpressed, it induces Rac prophage excision, possibly to counteract the lethal toxicity of YdaT. Overexpression of ydaS or ydaST reduces growth and leads to loss of cell viability. May contribute to toxicity and morphological defects. This chain is Putative transcriptional regulator YdaS (ydaS), found in Escherichia coli (strain K12).